A 177-amino-acid chain; its full sequence is UPF0114 protein HPAG1_0183 (177 aa).

4 helical membrane-spanning segments follow: residues 15–35, 54–74, 102–122, and 145–165; these read WLLAPLCIAMSLVLVVLGYVF, LVLSALGLVDLLFMAGLVLMV, FNALKLKVSLSIVAISAIFLL, and PIFWQVVIHLVFVCSALLAAV.

The protein belongs to the UPF0114 family.

It is found in the cell membrane. The chain is UPF0114 protein HPAG1_0183 from Helicobacter pylori (strain HPAG1).